The chain runs to 420 residues: Protein translocase subunit SecY (420 aa).

10 helical membrane passes run 9-29 (ILITLGFLFLYRVLAYIPIPG), 61-81 (LSIISLGIMPYITSSIIMELL), 104-124 (IVRYLTILITLIQAVSVSVGL), 141-161 (VFMIVSAFSMLTGTMLLMWIG), 173-193 (ISLIIFAGIVSGIPSAISGTF), 203-223 (ILMLIGIVLIVLATIFAIIYV), 257-277 (LSGVIPPIFASALLVFPSTIL), 300-320 (YNILMFLLIIFFAYFYSSIVF), 355-375 (KLTLWGSLYLALISTVPWILV), and 377-397 (AMGVPFYFGGTAVLIVVQVAI).

This sequence belongs to the SecY/SEC61-alpha family. Component of the Sec protein translocase complex. Heterotrimer consisting of SecY, SecE and SecG subunits. The heterotrimers can form oligomers, although 1 heterotrimer is thought to be able to translocate proteins. Interacts with the ribosome. Interacts with SecDF, and other proteins may be involved. Interacts with SecA.

Its subcellular location is the cell inner membrane. The central subunit of the protein translocation channel SecYEG. Consists of two halves formed by TMs 1-5 and 6-10. These two domains form a lateral gate at the front which open onto the bilayer between TMs 2 and 7, and are clamped together by SecE at the back. The channel is closed by both a pore ring composed of hydrophobic SecY resides and a short helix (helix 2A) on the extracellular side of the membrane which forms a plug. The plug probably moves laterally to allow the channel to open. The ring and the pore may move independently. The sequence is that of Protein translocase subunit SecY from Helicobacter pylori (strain J99 / ATCC 700824) (Campylobacter pylori J99).